The sequence spans 331 residues: Ornithine carbamoyltransferase (331 aa).

Carbamoyl phosphate contacts are provided by residues serine 55–threonine 58, glutamine 82, arginine 106, and histidine 133–glutamine 136. Residues asparagine 166, aspartate 230, and serine 234 to methionine 235 each bind L-ornithine. Residues cysteine 272–leucine 273 and arginine 317 contribute to the carbamoyl phosphate site.

Belongs to the aspartate/ornithine carbamoyltransferase superfamily. OTCase family.

The protein resides in the cytoplasm. The enzyme catalyses carbamoyl phosphate + L-ornithine = L-citrulline + phosphate + H(+). It functions in the pathway amino-acid biosynthesis; L-arginine biosynthesis; L-arginine from L-ornithine and carbamoyl phosphate: step 1/3. In terms of biological role, reversibly catalyzes the transfer of the carbamoyl group from carbamoyl phosphate (CP) to the N(epsilon) atom of ornithine (ORN) to produce L-citrulline. This Neisseria meningitidis serogroup A / serotype 4A (strain DSM 15465 / Z2491) protein is Ornithine carbamoyltransferase (argF).